We begin with the raw amino-acid sequence, 354 residues long: FAD synthetase 1, chloroplastic (354 aa).

Residues 1 to 75 constitute a chloroplast transit peptide; sequence MLCGGSRASV…SQGDDHPELS (75 aa). A disordered region spans residues 228 to 248; the sequence is SVNTEEEDSKSKERGQVSSTR.

Mg(2+) serves as cofactor.

The protein localises to the plastid. It is found in the chloroplast. It carries out the reaction FMN + ATP + H(+) = FAD + diphosphate. The protein operates within cofactor biosynthesis; FAD biosynthesis; FAD from FMN: step 1/1. Functionally, catalyzes the adenylation of flavin mononucleotide (FMN) to form flavin adenine dinucleotide (FAD) coenzyme. The sequence is that of FAD synthetase 1, chloroplastic from Arabidopsis thaliana (Mouse-ear cress).